Reading from the N-terminus, the 126-residue chain is Adenosine 5'-monophosphoramidase HINT1 (126 aa).

Ala-2 carries the N-acetylalanine modification. In terms of domain architecture, HIT spans 18–126 (IFGKIIRKEI…GGRQMNWPPG (109 aa)). 2 positions are modified to N6-acetyllysine: Lys-21 and Lys-30. AMP is bound at residue 43-44 (DI). Residues Ser-45 and Ser-72 each carry the phosphoserine modification. Residues Asn-99, 105 to 107 (GQS), and 112 to 114 (HLH) contribute to the AMP site. The Histidine triad motif motif lies at 110 to 114 (HIHLH). The Tele-AMP-histidine intermediate role is filled by His-112.

The protein belongs to the HINT family. As to quaternary structure, homodimer. Interacts with CDK7. Interacts with RUVBL1 and RUVBL2 and is associated with the LEF1/TCF1-CTNNB1 complex and with a KAT5 histone acetyltransferase complex. Identified in a complex with MITF and CTNNB1. Interacts with CDC34 and RBX1, and is part of a SCF (SKP2-CUL1-F-box protein) E3 ubiquitin-protein ligase complex. Interacts with SUMO1, SUMO2 and RGS17. Interacts with the Ten-1 ICD form of TENM1. Interacts with CALM1; interaction increases in the presence of calcium ions.

The protein resides in the cytoplasm. It localises to the nucleus. The enzyme catalyses adenosine 5'-phosphoramidate + H2O = AMP + NH4(+). In terms of biological role, exhibits adenosine 5'-monophosphoramidase activity, hydrolyzing purine nucleotide phosphoramidates with a single phosphate group such as adenosine 5'monophosphoramidate (AMP-NH2) to yield AMP and NH2. Hydrolyzes adenosine 5'monophosphomorpholidate (AMP-morpholidate) and guanosine 5'monophosphomorpholidate (GMP-morpholidate). Hydrolyzes lysyl-AMP (AMP-N-epsilon-(N-alpha-acetyl lysine methyl ester)) generated by lysine tRNA ligase, as well as Met-AMP, His-AMP and Asp-AMP, lysyl-GMP (GMP-N-epsilon-(N-alpha-acetyl lysine methyl ester)) and AMP-N-alanine methyl ester. Can also convert adenosine 5'-O-phosphorothioate and guanosine 5'-O-phosphorothioate to the corresponding nucleoside 5'-O-phosphates with concomitant release of hydrogen sulfide. In addition, functions as a scaffolding protein that modulates transcriptional activation by the LEF1/TCF1-CTNNB1 complex and by the complex formed with MITF and CTNNB1. Modulates p53/TP53 levels and p53/TP53-mediated apoptosis. Modulates proteasomal degradation of target proteins by the SCF (SKP2-CUL1-F-box protein) E3 ubiquitin-protein ligase complex. Also exhibits SUMO-specific isopeptidase activity, deconjugating SUMO1 from RANGAP1 and RGS17. The chain is Adenosine 5'-monophosphoramidase HINT1 (Hint1) from Rattus norvegicus (Rat).